Here is a 221-residue protein sequence, read N- to C-terminus: Adenylate kinase (221 aa).

G10 to T15 provides a ligand contact to ATP. The NMP stretch occupies residues S30–V59. Residues T31, R36, G57–V59, G85–R88, and Q92 contribute to the AMP site. Positions G122–D159 are LID. Residues R123 and T132–Y133 contribute to the ATP site. AMP-binding residues include R156 and R167. S207 is an ATP binding site.

The protein belongs to the adenylate kinase family. Monomer.

The protein resides in the cytoplasm. It carries out the reaction AMP + ATP = 2 ADP. It participates in purine metabolism; AMP biosynthesis via salvage pathway; AMP from ADP: step 1/1. Its function is as follows. Catalyzes the reversible transfer of the terminal phosphate group between ATP and AMP. Plays an important role in cellular energy homeostasis and in adenine nucleotide metabolism. This Polynucleobacter necessarius subsp. necessarius (strain STIR1) protein is Adenylate kinase.